Reading from the N-terminus, the 261-residue chain is Calbindin (261 aa).

Residue alanine 2 is modified to N-acetylalanine. Positions 2–7 (AESHLQ) are interaction with RANBP9. EF-hand domains are found at residues 11-46 (ITAS…LLQA), 53-88 (ELSP…EENF), 98-133 (KSCE…LLEK), 142-177 (KLAE…QENF), and 186-221 (MCGK…LCEK). Aspartate 24, aspartate 26, serine 28, tyrosine 30, and glutamate 35 together coordinate Ca(2+). Residues aspartate 111, aspartate 113, serine 115, glutamate 122, aspartate 155, asparagine 157, aspartate 159, lysine 161, glutamate 166, aspartate 199, aspartate 201, asparagine 203, tyrosine 205, and glutamate 210 each coordinate Ca(2+).

This sequence belongs to the calbindin family. As to quaternary structure, interacts with RANBP9. Expressed in the modiolar nerve root and in bushy neurons in the ventral cochlear nucleus (at protein level).

Its function is as follows. Buffers cytosolic calcium. May stimulate a membrane Ca(2+)-ATPase and a 3',5'-cyclic nucleotide phosphodiesterase. In Mus musculus (Mouse), this protein is Calbindin (Calb1).